Reading from the N-terminus, the 431-residue chain is 3-phosphoshikimate 1-carboxyvinyltransferase (431 aa).

Residues lysine 26, serine 27, and arginine 31 each contribute to the 3-phosphoshikimate site. Lysine 26 lines the phosphoenolpyruvate pocket. Phosphoenolpyruvate-binding residues include glycine 99 and arginine 127. Positions 170, 171, 172, 199, 314, and 343 each coordinate 3-phosphoshikimate. Glutamine 172 contacts phosphoenolpyruvate. Catalysis depends on glutamate 314, which acts as the Proton acceptor. Phosphoenolpyruvate is bound by residues arginine 347, arginine 388, and lysine 413.

It belongs to the EPSP synthase family. In terms of assembly, monomer.

The protein resides in the cytoplasm. It carries out the reaction 3-phosphoshikimate + phosphoenolpyruvate = 5-O-(1-carboxyvinyl)-3-phosphoshikimate + phosphate. Its pathway is metabolic intermediate biosynthesis; chorismate biosynthesis; chorismate from D-erythrose 4-phosphate and phosphoenolpyruvate: step 6/7. Catalyzes the transfer of the enolpyruvyl moiety of phosphoenolpyruvate (PEP) to the 5-hydroxyl of shikimate-3-phosphate (S3P) to produce enolpyruvyl shikimate-3-phosphate and inorganic phosphate. In Mycobacterium marinum (strain ATCC BAA-535 / M), this protein is 3-phosphoshikimate 1-carboxyvinyltransferase.